The following is a 454-amino-acid chain: UDP-N-acetylmuramate--L-alanine ligase (454 aa).

112–118 (GTHGKTT) contributes to the ATP binding site.

It belongs to the MurCDEF family.

It is found in the cytoplasm. It carries out the reaction UDP-N-acetyl-alpha-D-muramate + L-alanine + ATP = UDP-N-acetyl-alpha-D-muramoyl-L-alanine + ADP + phosphate + H(+). The protein operates within cell wall biogenesis; peptidoglycan biosynthesis. Its function is as follows. Cell wall formation. This Oleidesulfovibrio alaskensis (strain ATCC BAA-1058 / DSM 17464 / G20) (Desulfovibrio alaskensis) protein is UDP-N-acetylmuramate--L-alanine ligase.